Consider the following 247-residue polypeptide: Germin-like protein 9-1 (247 aa).

Positions Met-1 to Ala-25 are cleaved as a signal peptide. Residues Lys-53 to Asp-201 enclose the Cupin type-1 domain. His-100, His-102, and Glu-107 together coordinate Mn(2+). Asn-126 carries an N-linked (GlcNAc...) asparagine glycan. Residue His-148 participates in Mn(2+) binding. The N-linked (GlcNAc...) asparagine glycan is linked to Asn-153.

The protein belongs to the germin family. As to quaternary structure, oligomer (believed to be a pentamer but probably hexamer).

The protein localises to the secreted. It localises to the extracellular space. The protein resides in the apoplast. May play a role in plant defense. Probably has no oxalate oxidase activity even if the active site is conserved. The protein is Germin-like protein 9-1 of Oryza sativa subsp. japonica (Rice).